The sequence spans 37 residues: Large ribosomal subunit protein bL36 (37 aa).

Belongs to the bacterial ribosomal protein bL36 family.

This chain is Large ribosomal subunit protein bL36, found in Dictyoglomus thermophilum (strain ATCC 35947 / DSM 3960 / H-6-12).